A 956-amino-acid chain; its full sequence is uncharacterized protein (956 aa).

One can recognise a Fibronectin type-III domain in the interval 40-141 (PATKVSIDKI…IYCMTKAREA (102 aa)). 2 disordered regions span residues 152 to 173 (RNTITSSTAMQPRNSKSEPAPL) and 488 to 600 (NNGD…SYSH). 2 stretches are compositionally biased toward polar residues: residues 153–165 (NTITSSTAMQPRN) and 488–523 (NNGDSLAATNSNNSAEKNRSSGSIQLPLSNNMSRTG). Phosphothreonine is present on T154. S501 and S520 each carry phosphoserine. Positions 524–543 (SIDLISNNNKSINNSNADSA) are enriched in low complexity. Residues 552–563 (VSYSPSNEPIQP) are compositionally biased toward polar residues. Residues 564–574 (SSSLLSQLTQD) show a composition bias toward low complexity. Over residues 578 to 599 (RSMLSNHISSNNENKQQPSSYS) the composition is skewed to polar residues. Phosphoserine is present on residues S802, S842, and S895. The tract at residues 875 to 956 (VGPKVPAKEP…NLFNPHSHDS (82 aa)) is disordered. The span at 895-904 (SNSSISSAWS) shows a compositional bias: low complexity.

This is an uncharacterized protein from Saccharomyces cerevisiae (strain ATCC 204508 / S288c) (Baker's yeast).